Here is a 321-residue protein sequence, read N- to C-terminus: MTIHAQTPEPFSMSRAFTPRRLLLAVLLVALSALVLLGQSFRVFDRAWFAVQEWRHADAWKERSIWLPDYRVRIEAQPIEGLNDDVSALTFDPDRRTLFTVTNQPAQIIELSLQGKVLRTIPLTGFGDAEAIEYISRGVYVITDERQQRLVKVRLEDDTRFIDAADAQQLSLGIGLNGNKGFEGLAYDAEGKRLFVAKERDPVRIYEIHGFPHTQADKPFAVHVVDDPGRDKRLFVRDLSSLQFDEGTGHLLALSDESRLVVELDTDGEPVSTLSLLRGMHGLKRSVPQAEGVAMDDRGVLYLVSEPNLFYVFSKDEPAQP.

The N-terminal stretch at 1–42 is a signal peptide; sequence MTIHAQTPEPFSMSRAFTPRRLLLAVLLVALSALVLLGQSFR.

This sequence belongs to the YjiK family.

It is found in the cell inner membrane. Its function is as follows. Plays a role in intracellular Ca(2+) homeostasis. Involved in modulating Ca(2+)-induced swarming motility and pyocyanine production. Plays a role in regulating virulence in a Ca(2+)-dependent manner. Involved in cell protection against oxidative stress in the presence of elevated Ca(2+). This Pseudomonas aeruginosa (strain ATCC 15692 / DSM 22644 / CIP 104116 / JCM 14847 / LMG 12228 / 1C / PRS 101 / PAO1) protein is Calcium-regulated beta-propeller protein CarP.